The sequence spans 392 residues: Meiotically up-regulated gene 11 protein (392 aa).

The protein localises to the cytoplasm. The protein resides in the nucleus. Has a role in meiosis. The sequence is that of Meiotically up-regulated gene 11 protein (mug11) from Schizosaccharomyces pombe (strain 972 / ATCC 24843) (Fission yeast).